Consider the following 200-residue polypeptide: Coiled-coil domain-containing protein 28B (200 aa).

An N-acetylmethionine modification is found at Met-1. Positions 1–10 (MEDKKKKRSP) are enriched in basic residues. Positions 1–49 (MEDKKKKRSPKPCLTQPAQAPGTLRRVPVPTSHSGSLALGLPHLPSPKQ) are disordered. Phosphoserine is present on residues Ser-46 and Ser-115. Acidic residues predominate over residues 140-152 (GEEEDEEEEEDGV). Residues 140-165 (GEEEDEEEEEDGVTEGLPEEQKKTMA) form a disordered region. The stretch at 158–189 (EEQKKTMADRNLDQLLSNLEDLSNSIQKLHLA) forms a coiled coil.

In terms of assembly, interacts with BBS1, BBS2, BBS4, BBS5, BBS6, BBS7 and TTC8/BBS8. Interacts with MAPKAP1/SIN1 isoform 1 and RICTOR. As to expression, expressed in the retina, pericardium and limb epithelium.

The protein resides in the cytoplasm. Its subcellular location is the cytoskeleton. The protein localises to the microtubule organizing center. It localises to the centrosome. In terms of biological role, involved in ciliogenesis. Regulates cilia length through its interaction with MAPKAP1/SIN1 but independently of mTORC2 complex. Modulates mTORC2 complex assembly and function, possibly enhances AKT1 phosphorylation. Does not seem to modulate assembly and function of mTORC1 complex. The chain is Coiled-coil domain-containing protein 28B (Ccdc28b) from Mus musculus (Mouse).